The sequence spans 77 residues: MSTSTTIRVSTQTRDRLAAQARERGISMSALLTELAAQAERQAIFRAEREASHAETTTQAVRDEDREWEGTVGDGLG.

Residues Arg49–Gly77 form a disordered region.

In terms of assembly, forms a complex with cognate toxin MazF7.

Its function is as follows. Antitoxin component of a type II toxin-antitoxin (TA) system. This chain is Putative antitoxin MazE7 (mazE7), found in Mycobacterium tuberculosis (strain CDC 1551 / Oshkosh).